Here is a 131-residue protein sequence, read N- to C-terminus: Agouti-related protein (131 aa).

Residues 1–20 form the signal peptide; it reads MLTAMLLSCVLLLALPPTLG. Residues 21–81 constitute a propeptide that is removed on maturation; it reads VQMGVAPLKG…VLDPQNRESR (61 aa). Intrachain disulfides connect Cys-86–Cys-101, Cys-93–Cys-107, Cys-100–Cys-118, Cys-104–Cys-128, and Cys-109–Cys-116. In terms of domain architecture, Agouti spans 86 to 128; sequence CVRLHESCLGQQVPCCDPCATCYCRFFNAFCYCRKLGTATNLC. The tract at residues 110-112 is interaction with melanocortin receptors; sequence RFF.

In terms of assembly, interacts with melanocortin receptors MC3R, MC4R and MC5R. Expressed in arcuate nucleus and median eminence, adrenal gland (medulla), hypothalamus, testis, and lung.

It is found in the secreted. Its subcellular location is the golgi apparatus lumen. Plays a role in weight homeostasis. Involved in the control of feeding behavior through the central melanocortin system. Acts as alpha melanocyte-stimulating hormone antagonist by inhibiting cAMP production mediated by stimulation of melanocortin receptors within the hypothalamus and adrenal gland. Has very low activity with MC5R. Is an inverse agonist for MC3R and MC4R being able to suppress their constitutive activity. It promotes MC3R and MC4R endocytosis in an arrestin-dependent manner. The polypeptide is Agouti-related protein (Agrp) (Mus musculus (Mouse)).